Consider the following 191-residue polypeptide: uncharacterized protein (191 aa).

The first 23 residues, 1–23, serve as a signal peptide directing secretion; that stretch reads MKKTMSAITAAAAVTSCFTGFGA.

This is an uncharacterized protein from Bacillus subtilis (strain 168).